A 120-amino-acid polypeptide reads, in one-letter code: Ribonuclease P protein component 2 (120 aa).

The protein belongs to the eukaryotic/archaeal RNase P protein component 2 family. In terms of assembly, consists of a catalytic RNA component and at least 4-5 protein subunits.

The protein resides in the cytoplasm. It catalyses the reaction Endonucleolytic cleavage of RNA, removing 5'-extranucleotides from tRNA precursor.. Functionally, part of ribonuclease P, a protein complex that generates mature tRNA molecules by cleaving their 5'-ends. This chain is Ribonuclease P protein component 2, found in Thermococcus gammatolerans (strain DSM 15229 / JCM 11827 / EJ3).